Here is a 390-residue protein sequence, read N- to C-terminus: uncharacterized protein (390 aa).

This sequence belongs to the glycosyltransferase group 1 family. Glycosyltransferase 4 subfamily.

This is an uncharacterized protein from Methanocaldococcus jannaschii (strain ATCC 43067 / DSM 2661 / JAL-1 / JCM 10045 / NBRC 100440) (Methanococcus jannaschii).